Consider the following 367-residue polypeptide: Porin Omp2a (367 aa).

The first 22 residues, 1–22 (MNIKSLLLGSAAALVAASGAQA), serve as a signal peptide directing secretion.

It belongs to the alphaproteobacteria porin family. As to quaternary structure, monomer.

It is found in the cell outer membrane. In terms of biological role, forms passive diffusion pores that allow small molecular weight hydrophilic materials across the outer membrane. This Brucella melitensis biotype 1 (strain ATCC 23456 / CCUG 17765 / NCTC 10094 / 16M) protein is Porin Omp2a (omp2a).